Here is a 913-residue protein sequence, read N- to C-terminus: E3 ubiquitin-protein ligase ZNRF3 (913 aa).

Residues 1–32 (MRPRSGGRPGAPGRRRRRLRRGPRGRRLPPPP) form a disordered region. Positions 1–52 (MRPRSGGRPGAPGRRRRRLRRGPRGRRLPPPPPLPLLLGLLLAAAGPGAARA) are cleaved as a signal peptide. The segment covering 13 to 27 (GRRRRRLRRGPRGRR) has biased composition (basic residues). The Extracellular portion of the chain corresponds to 53–216 (KETAFVEVVL…PRQPTEYFDM (164 aa)). Residues 217–237 (GIFLAFFVVVSLVCLILLVKI) form a helical membrane-spanning segment. Residues 238–913 (KLKQRRSQNS…GSGPGIGTGA (676 aa)) lie on the Cytoplasmic side of the membrane. An RING-type; atypical zinc finger spans residues 290 to 331 (CAICLEKYIDGEELRVIPCTHRFHRKCVDPWLLQHHTCPHCR). Disordered stretches follow at residues 601–669 (AVHL…GLEV) and 855–913 (REEE…GTGA). Composition is skewed to polar residues over residues 634-664 (SGDQ…STSE) and 881-890 (ASLSSAPQDT). Positions 903 to 913 (PGSGPGIGTGA) are enriched in gly residues.

This sequence belongs to the ZNRF3 family. Interacts with LRP6, FZD4, FZD5, FZD6 and FZD8. Interacts with RSPO1; interaction promotes indirect interaction with LGR4 and membrane clearance of ZNRF3. Interacts with LMBR1L.

The protein localises to the cell membrane. It carries out the reaction S-ubiquitinyl-[E2 ubiquitin-conjugating enzyme]-L-cysteine + [acceptor protein]-L-lysine = [E2 ubiquitin-conjugating enzyme]-L-cysteine + N(6)-ubiquitinyl-[acceptor protein]-L-lysine.. Its pathway is protein modification; protein ubiquitination. Negatively regulated by R-spondin proteins such as RSPO1: interaction with RSPO1 induces the indirect association between ZNRF3 and LGR4, promoting membrane clearance of ZNRF3. E3 ubiquitin-protein ligase that acts as a negative regulator of the Wnt signaling pathway by mediating the ubiquitination and subsequent degradation of Wnt receptor complex components Frizzled and LRP6. Acts on both canonical and non-canonical Wnt signaling pathway. Acts as a tumor suppressor in the intestinal stem cell zone by inhibiting the Wnt signaling pathway, thereby restricting the size of the intestinal stem cell zone. Along with RSPO2 and RNF43, constitutes a master switch that governs limb specification. This chain is E3 ubiquitin-protein ligase ZNRF3 (Znrf3), found in Mus musculus (Mouse).